The chain runs to 607 residues: Autophagy-related protein 16-1 (607 aa).

The interaction with ATG5 stretch occupies residues 13-43 (WKRHISEQLRRRDRLQRQAFEEIILQYNKLL). A coiled-coil region spans residues 79–230 (DSQLQEMAQL…QKELAEAAKE (152 aa)). Serine 139 bears the Phosphoserine mark. Residues 207 to 230 (AENEKDSRRRQARLQKELAEAAKE) form a WIPI2-binding region. An RB1CC1-binding region spans residues 230–242 (EPLPVEQDDDIEV). Phosphoserine occurs at positions 269 and 287. A Caspase cleavage motif is present at residues 296–299 (DNVD). WD repeat units follow at residues 320–359 (AHDG…CEFK), 364–403 (GSNA…LRHT), 406–445 (GHSG…CIKT), 447–484 (FAGS…IVRE), 486–525 (ELLG…IKQT), 532–573 (KCGS…KVLS), and 575–607 (QHSS…WAQY).

The protein belongs to the WD repeat ATG16 family. Homodimer. Homooligomer. Heterooligomer with ATG16L2. Interacts with WIPI1. Interacts with WIPI2. Interacts with RB1CC1; the interaction is required for ULK1 complex-dependent autophagy. Interacts with ATG5. Part of the minor complex composed of 4 sets of ATG12-ATG5 and ATG16L1 (400 kDa); this complex interacts with ATG3 leading to disruption of ATG7 interaction and promotion of ATG8-like proteins lipidation. Part of the major complex composed of 8 sets of ATG12-ATG5 and ATG16L1 (800 kDa). Interacts with RAB33B (GTP- and GDP-bound forms); the complex consists of a tetramer where two RAB33B molecules bind independently one molecule of the ATG16L1 homodimer; the interaction promotes ATG12-ATG5-ATG16L1 complex recruitment to phagophores. Interacts (via WD repeats) with TMEM59; the interaction mediates unconventional autophagic activity of TMEM59. Interacts with TLR2. Interacts (via WD repeats) with MEFV. Interacts with PPP1CA; the interaction dephosphorylates ATG16L1 causing dissociation of ATG12-ATG5-ATG16L1 complex. Interacts (via N-terminal) with CLTC. Interacts with NOD1. Interacts with NOD2. Interacts with TUFM. Interacts with TRIM16. Interacts (via WD repeats) with SPATA33. Interacts with IRGM. Proteolytic cleavage by activated CASP3 leads to degradation and may regulate autophagy upon cellular stress and apoptotic stimuli. Post-translationally, phosphorylation at Ser-139 promotes association with the ATG12-ATG5 conjugate to form the ATG12-ATG5-ATG16L1 complex.

The protein resides in the cytoplasm. The protein localises to the preautophagosomal structure membrane. It localises to the endosome membrane. It is found in the lysosome membrane. Its function is as follows. Plays an essential role in both canonical and non-canonical autophagy: interacts with ATG12-ATG5 to mediate the lipidation to ATG8 family proteins (MAP1LC3A, MAP1LC3B, MAP1LC3C, GABARAPL1, GABARAPL2 and GABARAP). Acts as a molecular hub, coordinating autophagy pathways via distinct domains that support either canonical or non-canonical signaling. During canonical autophagy, interacts with ATG12-ATG5 to mediate the conjugation of phosphatidylethanolamine (PE) to ATG8 proteins, to produce a membrane-bound activated form of ATG8. Thereby, controls the elongation of the nascent autophagosomal membrane. As part of the ATG8 conjugation system with ATG5 and ATG12, required for recruitment of LRRK2 to stressed lysosomes and induction of LRRK2 kinase activity in response to lysosomal stress. Also involved in non-canonical autophagy, a parallel pathway involving conjugation of ATG8 proteins to single membranes at endolysosomal compartments, probably by catalyzing conjugation of phosphatidylserine (PS) to ATG8. Non-canonical autophagy plays a key role in epithelial cells to limit lethal infection by influenza A (IAV) virus. Regulates mitochondrial antiviral signaling (MAVS)-dependent type I interferon (IFN-I) production. Negatively regulates NOD1- and NOD2-driven inflammatory cytokine response. Instead, promotes an autophagy-dependent antibacterial pathway together with NOD1 or NOD2. Plays a role in regulating morphology and function of Paneth cell. This chain is Autophagy-related protein 16-1, found in Pongo abelii (Sumatran orangutan).